Here is a 509-residue protein sequence, read N- to C-terminus: ATP synthase subunit alpha (509 aa).

169 to 176 (GDRQTGKT) contacts ATP.

The protein belongs to the ATPase alpha/beta chains family. F-type ATPases have 2 components, CF(1) - the catalytic core - and CF(0) - the membrane proton channel. CF(1) has five subunits: alpha(3), beta(3), gamma(1), delta(1), epsilon(1). CF(0) has three main subunits: a(1), b(2) and c(9-12). The alpha and beta chains form an alternating ring which encloses part of the gamma chain. CF(1) is attached to CF(0) by a central stalk formed by the gamma and epsilon chains, while a peripheral stalk is formed by the delta and b chains.

The protein localises to the cell inner membrane. The catalysed reaction is ATP + H2O + 4 H(+)(in) = ADP + phosphate + 5 H(+)(out). In terms of biological role, produces ATP from ADP in the presence of a proton gradient across the membrane. The alpha chain is a regulatory subunit. This Paramagnetospirillum magneticum (strain ATCC 700264 / AMB-1) (Magnetospirillum magneticum) protein is ATP synthase subunit alpha.